The primary structure comprises 87 residues: Large ribosomal subunit protein bL27 (87 aa).

The interval 1-26 (MAHKKGTGSTRNGRDSNSKRLGVKAY) is disordered.

Belongs to the bacterial ribosomal protein bL27 family.

The chain is Large ribosomal subunit protein bL27 from Prochlorococcus marinus (strain SARG / CCMP1375 / SS120).